We begin with the raw amino-acid sequence, 432 residues long: Adenylosuccinate synthetase (432 aa).

Residues 13–19 (GDEGKGK) and 41–43 (GHT) contribute to the GTP site. Asp-14 functions as the Proton acceptor in the catalytic mechanism. Mg(2+) contacts are provided by Asp-14 and Gly-41. Residues 14–17 (DEGK), 39–42 (NAGH), Thr-131, Arg-145, Gln-226, Thr-241, and Arg-305 each bind IMP. The active-site Proton donor is His-42. 301 to 307 (SVTGRAR) serves as a coordination point for substrate. GTP contacts are provided by residues Arg-307, 333–335 (KLD), and 416–418 (STG).

The protein belongs to the adenylosuccinate synthetase family. As to quaternary structure, homodimer. Requires Mg(2+) as cofactor.

Its subcellular location is the cytoplasm. The enzyme catalyses IMP + L-aspartate + GTP = N(6)-(1,2-dicarboxyethyl)-AMP + GDP + phosphate + 2 H(+). The protein operates within purine metabolism; AMP biosynthesis via de novo pathway; AMP from IMP: step 1/2. Plays an important role in the de novo pathway of purine nucleotide biosynthesis. Catalyzes the first committed step in the biosynthesis of AMP from IMP. The polypeptide is Adenylosuccinate synthetase (Neisseria meningitidis serogroup B (strain ATCC BAA-335 / MC58)).